A 523-amino-acid chain; its full sequence is ATP synthase subunit alpha (523 aa).

173 to 180 (GDRQTGKT) contacts ATP.

Belongs to the ATPase alpha/beta chains family. F-type ATPases have 2 components, CF(1) - the catalytic core - and CF(0) - the membrane proton channel. CF(1) has five subunits: alpha(3), beta(3), gamma(1), delta(1), epsilon(1). CF(0) has three main subunits: a(1), b(2) and c(9-12). The alpha and beta chains form an alternating ring which encloses part of the gamma chain. CF(1) is attached to CF(0) by a central stalk formed by the gamma and epsilon chains, while a peripheral stalk is formed by the delta and b chains.

It is found in the cell membrane. The catalysed reaction is ATP + H2O + 4 H(+)(in) = ADP + phosphate + 5 H(+)(out). Produces ATP from ADP in the presence of a proton gradient across the membrane. The alpha chain is a regulatory subunit. This is ATP synthase subunit alpha from Streptomyces griseus subsp. griseus (strain JCM 4626 / CBS 651.72 / NBRC 13350 / KCC S-0626 / ISP 5235).